A 95-amino-acid chain; its full sequence is MIQAWHFPALQGAVNELQGSQSRIDALLEQCQESLTKLQSSWHGSGNESYSSVQRRFNQNTEGINHALGDLVQAINHSAETMQQTEAGVMSMFTG.

The protein belongs to the WXG100 family. ESAT-6 subfamily. In terms of assembly, forms a tight 1:1 complex with EsxB.

It is found in the secreted. A secreted protein that might play a role in virulence. The sequence is that of 6 kDa early secretory antigenic target homolog (esxA) from Mycobacterium leprae (strain TN).